The sequence spans 177 residues: Phycoerythrin beta subunit (177 aa).

Residues Y18, K28, N35, and D39 each contribute to the (2R,3E)-phycocyanobilin site. 15,16-dihydrobiliverdin contacts are provided by C50, D54, and C61. Residues R77, C82, R84, and D85 each coordinate (2R,3E)-phycocyanobilin. 15,16-dihydrobiliverdin-binding residues include R129, Q148, and K149. (2R,3E)-phycocyanobilin-binding residues include P154, G156, and C158.

Belongs to the phycobiliprotein family. Heterotetramer of 2 identical alpha chains and 2 identical beta chains which form 2 alpha-beta heterodimers within the heterotetramer. The two alpha-beta heterodimers are rotated to an open configuration in contrast to the closed configuration found in other cryptophyte species due to the insertion of a single amino acid, 'Asp-65', in a conserved region of the alpha chain. In the open form, the central chromophores are not in physical contact but are separated by a water-filled channel. In terms of processing, contains three phycocyanobilin chromophores and one 15,16-dihydrobiliverdin chromophore with binding of the phycocyanobilin chromophores mediated by both the alpha and beta subunits.

It localises to the plastid. Its subcellular location is the chloroplast thylakoid membrane. Light-harvesting photosynthetic bile pigment-protein from the phycobiliprotein complex. This Hemiselmis virescens protein is Phycoerythrin beta subunit.